The following is a 566-amino-acid chain: Putative ankyrin repeat protein RF_0987 (566 aa).

Disordered stretches follow at residues 61–118 (KKKN…HENS), 276–314 (PPVMPTNQPSTQPITPPSPNTPVTTPSKVVPTTDSSAEI), and 355–392 (VNNNQTTNNQEKSPPVSSSNVTIQKQDDKVNNETSEST). A compositionally biased stretch (basic and acidic residues) spans 78 to 92 (NQEEPKLASQEHTEA). Residues 101-112 (TGNTALPSVTAS) are compositionally biased toward polar residues. The segment covering 296–308 (TPVTTPSKVVPTT) has biased composition (low complexity). Residues 365–378 (EKSPPVSSSNVTIQ) show a composition bias toward polar residues. ANK repeat units lie at residues 506 to 535 (SGETLLTAAIYNDNYYLAKFLVIRGIKIST) and 539 to 566 (ECQYPLDIALAQGNANIACMLIKAKGYQ).

The chain is Putative ankyrin repeat protein RF_0987 from Rickettsia felis (strain ATCC VR-1525 / URRWXCal2) (Rickettsia azadi).